The primary structure comprises 450 residues: UPF0210 protein MK1214 (450 aa).

It belongs to the UPF0210 family.

The chain is UPF0210 protein MK1214 from Methanopyrus kandleri (strain AV19 / DSM 6324 / JCM 9639 / NBRC 100938).